The following is an 824-amino-acid chain: Lysine-specific histone demethylase 1B homolog (824 aa).

The interval 1-31 is disordered; it reads MTTELEIDDRKEEEAQIPGETSESEEGDEPV. The SWIRM domain occupies 245–346; that stretch reads PFTDVIANIV…YGAFDFRIDP (102 aa). Residues 352–407, Val-579, Glu-788, and 796–798 each bind FAD; these read PKIA…AQII and QTM.

This sequence belongs to the flavin monoamine oxidase family. It depends on FAD as a cofactor. As to expression, in hermaphrodites, expressed in gut cells, embryonic cells and sheath cells. Not expressed in sperm or pharyngeal neurons.

Its subcellular location is the nucleus. It carries out the reaction N(6),N(6)-dimethyl-L-lysyl(4)-[histone H3] + 2 A + 2 H2O = L-lysyl(4)-[histone H3] + 2 formaldehyde + 2 AH2. Histone demethylase that demethylates di-methylated 'Lys-4' of histone H3, a specific tag for epigenetic transcriptional activation, thereby acting as a corepressor. Acts by oxidizing the substrate by FAD to generate the corresponding imine that is subsequently hydrolyzed. Plays a role in the mitotic development of the germline. May be involved in H3 demethylation in mitotic cells including gut and embryonic cells. Plays a role in sensitivity upon interstrand cross-link DNA damage, probably by positively regulating the expression of mlh-1. Plays a role in developmental growth and lifespan regulation in response to ultraviolet-induced damage. No obvious role in larval development, sex chromosome segregation or for regulating meiotic crossover frequency. This chain is Lysine-specific histone demethylase 1B homolog, found in Caenorhabditis elegans.